The chain runs to 517 residues: Maturase K (517 aa).

This sequence belongs to the intron maturase 2 family. MatK subfamily.

The protein localises to the plastid. It localises to the chloroplast. Functionally, usually encoded in the trnK tRNA gene intron. Probably assists in splicing its own and other chloroplast group II introns. The polypeptide is Maturase K (Paris tetraphylla).